Here is a 118-residue protein sequence, read N- to C-terminus: UPF0102 protein DICTH_1420 (118 aa).

This sequence belongs to the UPF0102 family.

In Dictyoglomus thermophilum (strain ATCC 35947 / DSM 3960 / H-6-12), this protein is UPF0102 protein DICTH_1420.